A 99-amino-acid chain; its full sequence is DNA-binding protein HU (99 aa).

The segment at 67 to 86 (REGRNPKTGAKMKIDAYNQP) is disordered.

Belongs to the bacterial histone-like protein family. Homodimer.

In terms of biological role, histone-like DNA-binding protein which is capable of wrapping DNA to stabilize it, and thus to prevent its denaturation under extreme environmental conditions. This is DNA-binding protein HU (hup) from Rickettsia felis (strain ATCC VR-1525 / URRWXCal2) (Rickettsia azadi).